We begin with the raw amino-acid sequence, 143 residues long: Hemoglobin subunit alpha-1 (143 aa).

Serine 2 bears the N-acetylserine mark. One can recognise a Globin domain in the interval 2 to 143; the sequence is SLSSKDKATV…RALALAEKYR (142 aa). Histidine 60 serves as a coordination point for O2. Residue histidine 89 coordinates heme b.

This sequence belongs to the globin family. As to quaternary structure, hb 1 is a heterotetramer of two alpha-1 and two beta-1 chains. Hb 3 is a heterotetramer of two alpha-1 and two beta-2 chains. In terms of tissue distribution, red blood cells.

Its function is as follows. Involved in oxygen transport from gills to the various peripheral tissues. The sequence is that of Hemoglobin subunit alpha-1 (hba1) from Gadus morhua (Atlantic cod).